Reading from the N-terminus, the 602-residue chain is DNA mismatch repair protein MutL (602 aa).

Residues 337 to 367 form a disordered region; that stretch reads KRPFPGSSTNYSGIQQDTKKQESDNPEKARG. Residues 342–352 are compositionally biased toward polar residues; the sequence is GSSTNYSGIQQ. The span at 353-367 shows a compositional bias: basic and acidic residues; the sequence is DTKKQESDNPEKARG.

This sequence belongs to the DNA mismatch repair MutL/HexB family.

Its function is as follows. This protein is involved in the repair of mismatches in DNA. It is required for dam-dependent methyl-directed DNA mismatch repair. May act as a 'molecular matchmaker', a protein that promotes the formation of a stable complex between two or more DNA-binding proteins in an ATP-dependent manner without itself being part of a final effector complex. The polypeptide is DNA mismatch repair protein MutL (Kosmotoga olearia (strain ATCC BAA-1733 / DSM 21960 / TBF 19.5.1)).